The following is a 72-amino-acid chain: Brevinin-2SN3 (72 aa).

Residues 1 to 22 (MFTLKKPLLLLVFLGMISLSLC) form the signal peptide. Positions 23 to 40 (QDERGADEDDGGEMTEEE) are cleaved as a propeptide — removed in mature form. C66 and C72 are joined by a disulfide.

It belongs to the frog skin active peptide (FSAP) family. Brevinin subfamily. Expressed by the skin glands.

It localises to the secreted. Antimicrobial peptide. Active against a variety of Gram-negative and Gram-positive bacterial strains. Active against fungus C.glabrata 090902 but not against C.albicans ATCC 10231. Shows hemolytic activity against human erythrocytes. In Sylvirana spinulosa (Fine-spined frog), this protein is Brevinin-2SN3.